A 302-amino-acid chain; its full sequence is tRNA dimethylallyltransferase (302 aa).

Residue 9–16 (GPTGSGKT) participates in ATP binding. Residue 11–16 (TGSGKT) participates in substrate binding.

The protein belongs to the IPP transferase family. Monomer. The cofactor is Mg(2+).

The enzyme catalyses adenosine(37) in tRNA + dimethylallyl diphosphate = N(6)-dimethylallyladenosine(37) in tRNA + diphosphate. Its function is as follows. Catalyzes the transfer of a dimethylallyl group onto the adenine at position 37 in tRNAs that read codons beginning with uridine, leading to the formation of N6-(dimethylallyl)adenosine (i(6)A). This is tRNA dimethylallyltransferase from Thermus thermophilus (strain ATCC BAA-163 / DSM 7039 / HB27).